The following is a 450-amino-acid chain: Phosphoglucosamine mutase (450 aa).

Serine 97 functions as the Phosphoserine intermediate in the catalytic mechanism. The Mg(2+) site is built by serine 97, aspartate 236, aspartate 238, and aspartate 240. Residue serine 97 is modified to Phosphoserine.

This sequence belongs to the phosphohexose mutase family. The cofactor is Mg(2+). Post-translationally, activated by phosphorylation.

It carries out the reaction alpha-D-glucosamine 1-phosphate = D-glucosamine 6-phosphate. In terms of biological role, catalyzes the conversion of glucosamine-6-phosphate to glucosamine-1-phosphate. This chain is Phosphoglucosamine mutase, found in Prochlorococcus marinus (strain MIT 9312).